We begin with the raw amino-acid sequence, 499 residues long: Tektin-like protein 1 (499 aa).

Coiled-coil stretches lie at residues 197 to 227 (SMLT…LKTL) and 297 to 317 (LNEA…MAKN). Tyrosine 372 carries the phosphotyrosine modification.

In terms of assembly, microtubule inner protein component of sperm flagellar doublet microtubules.

The protein resides in the cytoplasm. It localises to the cytoskeleton. It is found in the flagellum axoneme. Its function is as follows. Microtubule inner protein (MIP) part of the dynein-decorated doublet microtubules (DMTs) in sperm flagellar axoneme, which is required for motile flagellum beating. Forms an extensive interaction network cross-linking the lumen of axonemal doublet microtubules. This chain is Tektin-like protein 1, found in Homo sapiens (Human).